The sequence spans 358 residues: Protein IncC (358 aa).

The tract at residues 1–101 is disordered; sequence MGAIHEETAN…VGSRRQEETG (101 aa). Over residues 88–99 the composition is skewed to basic and acidic residues; it reads HRQEVGSRRQEE.

The protein belongs to the ParA family.

In terms of biological role, this is one of the proteins encoded by the trfB operon; it is involved in plasmid maintenance and replication. This chain is Protein IncC (incC), found in Escherichia coli.